Here is a 397-residue protein sequence, read N- to C-terminus: S-adenosylmethionine synthase (397 aa).

Residue H16 coordinates ATP. Residue D18 coordinates Mg(2+). E44 contributes to the K(+) binding site. Residues E57 and Q100 each coordinate L-methionine. The tract at residues 100–110 (QSPDIAQGVNE) is flexible loop. Residues 175-177 (DAK), 242-243 (RF), D251, 257-258 (RK), A274, and K278 contribute to the ATP site. D251 is an L-methionine binding site. K282 contacts L-methionine.

This sequence belongs to the AdoMet synthase family. In terms of assembly, homotetramer; dimer of dimers. Requires Mg(2+) as cofactor. It depends on K(+) as a cofactor.

The protein resides in the cytoplasm. It carries out the reaction L-methionine + ATP + H2O = S-adenosyl-L-methionine + phosphate + diphosphate. The protein operates within amino-acid biosynthesis; S-adenosyl-L-methionine biosynthesis; S-adenosyl-L-methionine from L-methionine: step 1/1. Its function is as follows. Catalyzes the formation of S-adenosylmethionine (AdoMet) from methionine and ATP. The overall synthetic reaction is composed of two sequential steps, AdoMet formation and the subsequent tripolyphosphate hydrolysis which occurs prior to release of AdoMet from the enzyme. The chain is S-adenosylmethionine synthase from Streptococcus thermophilus (strain CNRZ 1066).